A 316-amino-acid chain; its full sequence is Acetaldehyde dehydrogenase (316 aa).

11-14 serves as a coordination point for NAD(+); sequence SGNI. The Acyl-thioester intermediate role is filled by Cys-131. NAD(+) is bound by residues 162 to 170 and Asn-289; that span reads SAGPGTRAN.

The protein belongs to the acetaldehyde dehydrogenase family. Interacts with MhpE.

It carries out the reaction acetaldehyde + NAD(+) + CoA = acetyl-CoA + NADH + H(+). Its pathway is aromatic compound metabolism; 3-phenylpropanoate degradation. Its function is as follows. Catalyzes the conversion of acetaldehyde to acetyl-CoA, using NAD(+) and coenzyme A. Is the final enzyme in the meta-cleavage pathway for the degradation of aromatic compounds. The chain is Acetaldehyde dehydrogenase from Klebsiella pneumoniae subsp. pneumoniae (strain ATCC 700721 / MGH 78578).